A 251-amino-acid polypeptide reads, in one-letter code: Gamma-glutamyl peptidase 4 (251 aa).

Positions 16-213 (SEFAKKTYGG…IDRVLAGGHI (198 aa)) constitute a Glutamine amidotransferase type-1 domain. Cys-100 acts as the Nucleophile in catalysis. Catalysis depends on residues His-192 and Glu-194.

It belongs to the peptidase C26 family.

It localises to the cytoplasm. The protein localises to the cytosol. It participates in secondary metabolite biosynthesis. Its function is as follows. Involved in glucosinolate biosynthesis. Hydrolyzes the gamma-glutamyl peptide bond of several glutathione (GSH) conjugates to produce Cys-Gly conjugates related to glucosinolates. The gamma-Glu-Cys-Gly-GSH conjugates are the sulfur-donating molecule in glucosinolate biosynthesis. In Arabidopsis thaliana (Mouse-ear cress), this protein is Gamma-glutamyl peptidase 4.